We begin with the raw amino-acid sequence, 573 residues long: NEDD4-binding protein 3-B (573 aa).

Disordered regions lie at residues 119–138 (EFSKSSLPERGHSDKSRFGP), 173–220 (CVGS…NSYS), and 384–405 (GENEELRQKQSQSDNSGPNLED). The segment covering 125-135 (LPERGHSDKSR) has biased composition (basic and acidic residues). The span at 186–196 (SNSHSNNPSES) shows a compositional bias: low complexity. Composition is skewed to polar residues over residues 207–220 (DSKQNSINSLNSYS) and 392–401 (KQSQSDNSGP). The stretch at 287–474 (ESVEDVARQL…CLQALEDVKS (188 aa)) forms a coiled coil.

It belongs to the N4BP3 family.

It localises to the cytoplasmic vesicle. It is found in the cell projection. Its subcellular location is the axon. The protein localises to the dendrite. Plays a role in axon and dendrite arborization during cranial nerve development. Also important for neural crest migration and early development of other anterior structures including eye, brain and cranial cartilage. This chain is NEDD4-binding protein 3-B, found in Xenopus laevis (African clawed frog).